Consider the following 307-residue polypeptide: Thioredoxin reductase (307 aa).

FAD is bound at residue 36–43 (DNAAPGGK). Cysteine 138 and cysteine 141 are joined by a disulfide. 278–287 (DIRIKDIRQI) is a binding site for FAD.

The protein belongs to the class-II pyridine nucleotide-disulfide oxidoreductase family. Homodimer. The cofactor is FAD.

It localises to the cytoplasm. The catalysed reaction is [thioredoxin]-dithiol + NADP(+) = [thioredoxin]-disulfide + NADPH + H(+). The sequence is that of Thioredoxin reductase (trxB) from Mycoplasmopsis pulmonis (strain UAB CTIP) (Mycoplasma pulmonis).